Consider the following 169-residue polypeptide: Histone H1.9 (169 aa).

Polar residues-rich tracts occupy residues 1–10 (MSLVSPSPDS) and 19–36 (DASTSQVPSQSESKIGPN). Residues 1 to 36 (MSLVSPSPDSNAVMAGDQDASTSQVPSQSESKIGPN) are disordered. Residues 43–116 (RKPTMSKVIL…GASGSFRLGK (74 aa)) form the H15 domain. Phosphoserine occurs at positions 62 and 65. Basic residues predominate over residues 118-142 (QAFKSKCKAKRRQRRQKPGQRRTGS). The interval 118 to 154 (QAFKSKCKAKRRQRRQKPGQRRTGSRRSLLGSKKSNN) is disordered.

It belongs to the histone H1/H5 family.

It is found in the nucleus. It localises to the chromosome. In terms of biological role, DNA-binding protein that may be implicated in chromatin remodeling and/or transcriptional regulation during spermiogenesis, the process of spermatid maturation into spermatozoa. This is Histone H1.9 from Rattus norvegicus (Rat).